A 460-amino-acid polypeptide reads, in one-letter code: Proton extrusion protein PxcA (460 aa).

Disordered regions lie at residues 82–128 and 143–190; these read FSRL…QRRD and SRYK…GSGN. Positions 90–102 are enriched in polar residues; sequence QNGSGPTSAQDKA. Low complexity predominate over residues 107–120; that stretch reads AAEANVSESSSENS. Over residues 151-163 the composition is skewed to polar residues; sequence KSQPISASISTSP. A compositionally biased stretch (low complexity) spans 171–184; the sequence is QPTSTQPSSSNVSV. A run of 4 helical transmembrane segments spans residues 242–262, 337–357, 373–393, and 420–440; these read FLLL…NFLF, GLKN…LIFV, IYGL…DVFV, and FIYG…KYWI.

This sequence belongs to the CemA family.

The protein localises to the cell inner membrane. Functionally, required for H(+) efflux immediately after light irradiation to form a rapid H(+) concentration gradient across the thylakoid membranes. Together with PxcL, contributes to transient H(+) uptake following dark to light transition. This Synechococcus sp. (strain JA-2-3B'a(2-13)) (Cyanobacteria bacterium Yellowstone B-Prime) protein is Proton extrusion protein PxcA.